The following is a 274-amino-acid chain: Dermonecrotic toxin SdSicTox-betaIIB1bii (274 aa).

Histidine 5 is an active-site residue. 2 residues coordinate Mg(2+): glutamate 25 and aspartate 27. The active-site Nucleophile is the histidine 41. Disulfide bonds link cysteine 45–cysteine 51 and cysteine 47–cysteine 190. A Mg(2+)-binding site is contributed by aspartate 85.

It belongs to the arthropod phospholipase D family. Class II subfamily. It depends on Mg(2+) as a cofactor. As to expression, expressed by the venom gland.

The protein localises to the secreted. The enzyme catalyses an N-(acyl)-sphingosylphosphocholine = an N-(acyl)-sphingosyl-1,3-cyclic phosphate + choline. The catalysed reaction is an N-(acyl)-sphingosylphosphoethanolamine = an N-(acyl)-sphingosyl-1,3-cyclic phosphate + ethanolamine. It catalyses the reaction a 1-acyl-sn-glycero-3-phosphocholine = a 1-acyl-sn-glycero-2,3-cyclic phosphate + choline. It carries out the reaction a 1-acyl-sn-glycero-3-phosphoethanolamine = a 1-acyl-sn-glycero-2,3-cyclic phosphate + ethanolamine. In terms of biological role, dermonecrotic toxins cleave the phosphodiester linkage between the phosphate and headgroup of certain phospholipids (sphingolipid and lysolipid substrates), forming an alcohol (often choline) and a cyclic phosphate. This toxin acts on sphingomyelin (SM). It may also act on ceramide phosphoethanolamine (CPE), lysophosphatidylcholine (LPC) and lysophosphatidylethanolamine (LPE), but not on lysophosphatidylserine (LPS), and lysophosphatidylglycerol (LPG). It acts by transphosphatidylation, releasing exclusively cyclic phosphate products as second products. Induces dermonecrosis, hemolysis, increased vascular permeability, edema, inflammatory response, and platelet aggregation. In Sicarius cf. damarensis (strain GJB-2008) (Six-eyed sand spider), this protein is Dermonecrotic toxin SdSicTox-betaIIB1bii.